We begin with the raw amino-acid sequence, 427 residues long: Histidinol dehydrogenase (427 aa).

NAD(+) is bound by residues Tyr123, Gln185, and Asn208. Ser231, Gln253, and His256 together coordinate substrate. Positions 253 and 256 each coordinate Zn(2+). Residues Glu321 and His322 each act as proton acceptor in the active site. The substrate site is built by His322, Asp355, Glu409, and His414. Position 355 (Asp355) interacts with Zn(2+). Zn(2+) is bound at residue His414.

It belongs to the histidinol dehydrogenase family. Zn(2+) serves as cofactor.

It catalyses the reaction L-histidinol + 2 NAD(+) + H2O = L-histidine + 2 NADH + 3 H(+). It functions in the pathway amino-acid biosynthesis; L-histidine biosynthesis; L-histidine from 5-phospho-alpha-D-ribose 1-diphosphate: step 9/9. Its function is as follows. Catalyzes the sequential NAD-dependent oxidations of L-histidinol to L-histidinaldehyde and then to L-histidine. The protein is Histidinol dehydrogenase of Oceanobacillus iheyensis (strain DSM 14371 / CIP 107618 / JCM 11309 / KCTC 3954 / HTE831).